A 363-amino-acid chain; its full sequence is Peptide chain release factor 1 (363 aa).

Glutamine 237 carries the N5-methylglutamine modification. Over residues 284 to 296 the composition is skewed to basic and acidic residues; sequence EDEKRRSAEESTR. The interval 284–305 is disordered; that stretch reads EDEKRRSAEESTRRSLVASGDR.

Belongs to the prokaryotic/mitochondrial release factor family. In terms of processing, methylated by PrmC. Methylation increases the termination efficiency of RF1.

It is found in the cytoplasm. Its function is as follows. Peptide chain release factor 1 directs the termination of translation in response to the peptide chain termination codons UAG and UAA. The polypeptide is Peptide chain release factor 1 (Shewanella baltica (strain OS185)).